Here is a 428-residue protein sequence, read N- to C-terminus: Putative POM121-like protein 1 (428 aa).

5 disordered regions span residues 1 to 23, 36 to 204, 254 to 293, 306 to 384, and 402 to 428; these read MDSLWGPGAGSHPFGVHNSRLSP, KESG…KFPL, DCRPSRPSHTLSSLATGASGLPAVSKAPSMDAQQERHKSQ, TEVP…PSTL, and GPQPQLQQVPRGQNQRSQTSRTSSCPK. Residues 44 to 62 show a composition bias toward basic and acidic residues; the sequence is EQDKDPRVQENPGDQRRVP. A compositionally biased stretch (low complexity) spans 106–117; it reads QTSQTSWTSSCT. Polar residues-rich tracts occupy residues 118 to 129, 144 to 155, 260 to 269, 326 to 347, and 403 to 415; these read NRNAISSSYSST, SHCQLTLSSSKT, PSHTLSSLAT, FSSSDPLPATSSHSQDSAQVTS, and PQPQLQQVPRGQN. A compositionally biased stretch (low complexity) spans 416 to 428; it reads QRSQTSRTSSCPK.

This sequence belongs to the POM121 family.

The protein is Putative POM121-like protein 1 (POM121L1P) of Homo sapiens (Human).